The primary structure comprises 757 residues: Polyribonucleotide nucleotidyltransferase (757 aa).

Mg(2+)-binding residues include aspartate 489 and aspartate 495. In terms of domain architecture, KH spans proline 556–valine 615. An S1 motif domain is found at glycine 632–arginine 700. The segment at aspartate 702 to phenylalanine 757 is disordered. The span at proline 715–lysine 725 shows a compositional bias: basic residues. Positions serine 732 to isoleucine 751 are enriched in polar residues.

Belongs to the polyribonucleotide nucleotidyltransferase family. Mg(2+) serves as cofactor.

It localises to the cytoplasm. It carries out the reaction RNA(n+1) + phosphate = RNA(n) + a ribonucleoside 5'-diphosphate. In terms of biological role, involved in mRNA degradation. Catalyzes the phosphorolysis of single-stranded polyribonucleotides processively in the 3'- to 5'-direction. The polypeptide is Polyribonucleotide nucleotidyltransferase (Neorickettsia sennetsu (strain ATCC VR-367 / Miyayama) (Ehrlichia sennetsu)).